Here is a 397-residue protein sequence, read N- to C-terminus: Phosphoglycerate kinase (397 aa).

Substrate-binding positions include 21-23 (DFN), arginine 37, 60-63 (HLGR), arginine 120, and arginine 153. Residues lysine 206, glycine 296, glutamate 327, and 353–356 (GGDS) contribute to the ATP site.

Belongs to the phosphoglycerate kinase family. As to quaternary structure, monomer.

It localises to the cytoplasm. It catalyses the reaction (2R)-3-phosphoglycerate + ATP = (2R)-3-phospho-glyceroyl phosphate + ADP. Its pathway is carbohydrate degradation; glycolysis; pyruvate from D-glyceraldehyde 3-phosphate: step 2/5. In Rhodopirellula baltica (strain DSM 10527 / NCIMB 13988 / SH1), this protein is Phosphoglycerate kinase.